We begin with the raw amino-acid sequence, 449 residues long: Procollagen C-endopeptidase enhancer 1 (449 aa).

Positions 1–25 (MLPAATASLLGPLLTACALLPFAQG) are cleaved as a signal peptide. Asparagine 29 is a glycosylation site (N-linked (GlcNAc...) asparagine). 7 disulfide bridges follow: cysteine 37–cysteine 63, cysteine 90–cysteine 112, cysteine 159–cysteine 186, cysteine 213–cysteine 236, cysteine 318–cysteine 386, cysteine 322–cysteine 389, and cysteine 333–cysteine 437. 2 consecutive CUB domains span residues 37-149 (CGGD…YSGR) and 159-273 (CGGR…YKTL). Phosphoserine is present on serine 50. Residues 271 to 321 (KTLPRGTAKEGQGPGPKRGTEPKVKLPPKSQPPEKTEESPSAPDAPTCPKQ) form a disordered region. The NTR domain occupies 318 to 437 (CPKQCRRTGT…ILTNLSKRKC (120 aa)). Asparagine 431 carries an N-linked (GlcNAc...) asparagine glycan.

In terms of assembly, interacts with EFEMP2. In terms of processing, C-terminally processed at multiple positions.

It is found in the secreted. Functionally, binds to the C-terminal propeptide of type I procollagen and enhances procollagen C-proteinase activity. C-terminal processed part of PCPE (CT-PCPE) may have an metalloproteinase inhibitory activity. In Homo sapiens (Human), this protein is Procollagen C-endopeptidase enhancer 1 (PCOLCE).